A 176-amino-acid chain; its full sequence is Dual-action ribosomal maturation protein DarP (176 aa).

This sequence belongs to the DarP family.

It localises to the cytoplasm. Functionally, member of a network of 50S ribosomal subunit biogenesis factors which assembles along the 30S-50S interface, preventing incorrect 23S rRNA structures from forming. Promotes peptidyl transferase center (PTC) maturation. The sequence is that of Dual-action ribosomal maturation protein DarP from Haemophilus ducreyi (strain 35000HP / ATCC 700724).